Consider the following 376-residue polypeptide: Serine-arginine protein 55 (376 aa).

Positions 4-74 (SRVYVGGLPY…ERVVVEPARG (71 aa)) constitute an RRM 1 domain. A disordered region spans residues 73-114 (RGTARGSNRDRYDDRYGGRRGGGGGRYNEKNKNSRSSSRYGP). Basic and acidic residues predominate over residues 79–89 (SNRDRYDDRYG). An RRM 2 domain is found at 120 to 193 (YRLIVENLSS…RRIHLVEDRR (74 aa)). Residue Ser165 is modified to Phosphoserine. A compositionally biased stretch (basic and acidic residues) spans 185–194 (RIHLVEDRRG). Positions 185–376 (RIHLVEDRRG…PDRNNESMDD (192 aa)) are disordered. A compositionally biased stretch (gly residues) spans 196–205 (RSGGGGGSGR). 2 stretches are compositionally biased toward basic residues: residues 215–263 (SRSR…SRSN) and 271–283 (SKSK…RSRS). The segment covering 284 to 304 (PKRERDSRSRSRSVSKRESRS) has biased composition (basic and acidic residues).

Belongs to the splicing factor SR family. Extensively phosphorylated on serine residues in the RS domain.

It localises to the nucleus. Its function is as follows. Essential for development. May have a critical role in splicing or in controlling alternative splice site use of at least some pre-mRNA in vivo. Not required for all splicing. May play a general role in the condensation or decondensation of chromatin. The protein is Serine-arginine protein 55 (B52) of Drosophila melanogaster (Fruit fly).